The chain runs to 61 residues: MKYTEIKDKTAGELATMLKEKKVLLFTLRQKLKTMQLTNPKEISEVKKDIARINTAISALK.

The protein belongs to the universal ribosomal protein uL29 family.

In Campylobacter lari (strain RM2100 / D67 / ATCC BAA-1060), this protein is Large ribosomal subunit protein uL29.